The primary structure comprises 230 residues: Iron-dependent repressor IdeR (230 aa).

In terms of domain architecture, HTH dtxR-type spans 4–65; sequence LVDTTEMYLR…VAGNRHLELT (62 aa).

It belongs to the DtxR/MntR family. Homodimer.

The protein resides in the cytoplasm. In terms of biological role, metal-dependent DNA-binding protein that controls transcription of many genes involved in iron metabolism. The polypeptide is Iron-dependent repressor IdeR (ideR) (Mycobacterium leprae (strain TN)).